The sequence spans 430 residues: MIEMFDFTKEVDIGIFNKIQNRSKLENKEIAKRVEDIIENVRERKDKALFEYTYMYDGINLNSETVKVKEEEIKRAYEEVKEDFLKALDKAIKNITEFHEKQKEKTWMDFKEGIVYGQVLRPLSSVGIYVPGGTASYPSSVLMNGIPAKVAGVERIVMVSPAGKKGISPYVLVAADKIGIKEIYKIGGAQAVAALAFGTESIPKVDKIVGPGNIYVAMAKRALYGYVDIDMVAGPSEILVIADESASPKYVAADLLSQAEHDVMASSILVTTSKELAEKVKKEIERQMEYLERKEIIAESLKNFGAIIVIDNLKEAIGIANEIAPEHLELVIENPFEILGEIKNAGAVFLGEFSPEPLGDYLAGPNHVLPTSGTARFFSPLSVRDFVKKMNVLYYSKEALSSVKDDVITLAEAEELTAHANSVKVRFYND.

3 residues coordinate NAD(+): Tyr129, Gln190, and Asn213. The substrate site is built by Ser236, Gln258, and His261. The Zn(2+) site is built by Gln258 and His261. Catalysis depends on proton acceptor residues Glu326 and His327. Substrate is bound by residues His327, Asp360, Glu414, and His419. Zn(2+) is bound at residue Asp360. His419 is a Zn(2+) binding site.

Belongs to the histidinol dehydrogenase family. Zn(2+) is required as a cofactor.

The enzyme catalyses L-histidinol + 2 NAD(+) + H2O = L-histidine + 2 NADH + 3 H(+). Its pathway is amino-acid biosynthesis; L-histidine biosynthesis; L-histidine from 5-phospho-alpha-D-ribose 1-diphosphate: step 9/9. Its function is as follows. Catalyzes the sequential NAD-dependent oxidations of L-histidinol to L-histidinaldehyde and then to L-histidine. This chain is Histidinol dehydrogenase, found in Caldanaerobacter subterraneus subsp. tengcongensis (strain DSM 15242 / JCM 11007 / NBRC 100824 / MB4) (Thermoanaerobacter tengcongensis).